The chain runs to 626 residues: ATP-dependent RNA helicase dbp-8 (626 aa).

Low complexity predominate over residues Met1–Ala25. The interval Met1–Pro183 is disordered. The span at Asp40 to Asn98 shows a compositional bias: acidic residues. Basic and acidic residues predominate over residues Lys161 to Glu173. The Q motif signature appears at Thr195–Lys223. Residues Ile226–Pro406 enclose the Helicase ATP-binding domain. Residue Ser239–Thr246 coordinates ATP. The short motif at Asp348–Asp351 is the DEAD box element. The Helicase C-terminal domain occupies Tyr438–Arg589.

It belongs to the DEAD box helicase family. DDX49/DBP8 subfamily.

The protein resides in the nucleus. It localises to the nucleolus. The enzyme catalyses ATP + H2O = ADP + phosphate + H(+). Its function is as follows. ATP-binding RNA helicase involved in 40S ribosomal subunit biogenesis and is required for the normal formation of 18S rRNAs through pre-rRNA processing at A0, A1 and A2 sites. Required for vegetative growth. The protein is ATP-dependent RNA helicase dbp-8 (dbp-8) of Neurospora crassa (strain ATCC 24698 / 74-OR23-1A / CBS 708.71 / DSM 1257 / FGSC 987).